The following is a 121-amino-acid chain: Peptidyl-tRNA hydrolase (121 aa).

It belongs to the PTH2 family.

It localises to the cytoplasm. The enzyme catalyses an N-acyl-L-alpha-aminoacyl-tRNA + H2O = an N-acyl-L-amino acid + a tRNA + H(+). The natural substrate for this enzyme may be peptidyl-tRNAs which drop off the ribosome during protein synthesis. The sequence is that of Peptidyl-tRNA hydrolase from Sulfurisphaera tokodaii (strain DSM 16993 / JCM 10545 / NBRC 100140 / 7) (Sulfolobus tokodaii).